The primary structure comprises 118 residues: SPbeta prophage-derived uncharacterized protein YolB (118 aa).

The sequence is that of SPbeta prophage-derived uncharacterized protein YolB (yolB) from Bacillus subtilis (strain 168).